The chain runs to 607 residues: Pyruvate decarboxylase 1 (607 aa).

Residues aspartate 69 and histidine 156 each coordinate substrate. Positions 434 to 516 (DSWFNCQKLK…FLINNGGYTI (83 aa)) are thiamine pyrophosphate binding. Mg(2+) is bound by residues aspartate 484, asparagine 511, and glycine 513. Glutamate 517 contributes to the substrate binding site.

Belongs to the TPP enzyme family. In terms of assembly, homotetramer. A metal cation serves as cofactor. Requires thiamine diphosphate as cofactor. As to expression, highly expressed in seeds, and at lower levels in roots and siliques.

The catalysed reaction is a 2-oxocarboxylate + H(+) = an aldehyde + CO2. Its function is as follows. May play a role in ethanolic fermentation during anoxia. The chain is Pyruvate decarboxylase 1 (PDC1) from Arabidopsis thaliana (Mouse-ear cress).